The sequence spans 171 residues: Large ribosomal subunit protein uL10 (171 aa).

This sequence belongs to the universal ribosomal protein uL10 family. As to quaternary structure, part of the ribosomal stalk of the 50S ribosomal subunit. The N-terminus interacts with L11 and the large rRNA to form the base of the stalk. The C-terminus forms an elongated spine to which L12 dimers bind in a sequential fashion forming a multimeric L10(L12)X complex.

Functionally, forms part of the ribosomal stalk, playing a central role in the interaction of the ribosome with GTP-bound translation factors. The polypeptide is Large ribosomal subunit protein uL10 (Nitrosomonas europaea (strain ATCC 19718 / CIP 103999 / KCTC 2705 / NBRC 14298)).